The sequence spans 655 residues: Epithelial sodium channel subunit alpha (655 aa).

The Cytoplasmic portion of the chain corresponds to 1-55 (MTDKEEEAEGGKKKEPMIGFYDSYQELFEFFCNNTTIHGTIRMVCSKHNNMKTVS). The chain crosses the membrane as a helical span at residues 56-76 (WTILFITTFGVMYWQFGLLLG). Over 77 to 531 (QYYSYPVSIT…SQWSLWFGSS (455 aa)) the chain is Extracellular. 10 disulfides stabilise this stretch: cysteine 102/cysteine 275, cysteine 199/cysteine 206, cysteine 252/cysteine 259, cysteine 364/cysteine 448, cysteine 385/cysteine 425, cysteine 385/cysteine 444, cysteine 389/cysteine 440, cysteine 398/cysteine 425, cysteine 398/cysteine 448, and cysteine 400/cysteine 414. Residues 532–552 (VLSVVEMGELVFDLIAVGVIV) traverse the membrane as a helical segment. Residues 553–655 (LRRRRREKCQ…QEASEGPTVL (103 aa)) lie on the Cytoplasmic side of the membrane. The disordered stretch occupies residues 561 to 587 (CQASSDGEGTSDSTAGTHRGQENASRS). Over residues 562 to 586 (QASSDGEGTSDSTAGTHRGQENASR) the composition is skewed to polar residues.

It belongs to the amiloride-sensitive sodium channel (TC 1.A.6) family. SCNN1A subfamily. Heterotrimer; containing an alpha/SCNN1A, a beta/SCNN1B and a gamma/SCNN1G subunit. As to expression, strongly expressed in gill, kidney and rectum (at protein level). More weakly expressed in muscle, brain, heart, liver and intestine.

The protein resides in the apical cell membrane. It is found in the cell projection. It localises to the cilium. The protein localises to the cytoplasmic granule. Its subcellular location is the cytoplasm. The protein resides in the cytoplasmic vesicle. It is found in the secretory vesicle. It localises to the acrosome. The protein localises to the flagellum. It catalyses the reaction Na(+)(in) = Na(+)(out). Its activity is regulated as follows. Originally identified and characterized by its inhibition by the diuretic drug amiloride. In terms of biological role, this is one of the three pore-forming subunits of the heterotrimeric epithelial sodium channel (ENaC), a critical regulator of sodium balance and fluid homeostasis. ENaC operates in epithelial tissues, where it mediates the electrodiffusion of sodium ions from extracellular fluid through the apical membrane of cells, with water following osmotically. The chain is Epithelial sodium channel subunit alpha (scnn1a) from Neoceratodus forsteri (Australian lungfish).